The primary structure comprises 98 residues: Citrate lyase acyl carrier protein (98 aa).

The residue at position 14 (Ser-14) is an O-(phosphoribosyl dephospho-coenzyme A)serine.

It belongs to the CitD family. Oligomer with a subunit composition of (alpha,beta,gamma)6.

It is found in the cytoplasm. Its function is as follows. Covalent carrier of the coenzyme of citrate lyase. The polypeptide is Citrate lyase acyl carrier protein (Escherichia coli O81 (strain ED1a)).